The following is a 965-amino-acid chain: Vacuolar membrane protease (965 aa).

Over 1-16 (MARPSLSPSNPLGFTP) the chain is Cytoplasmic. The helical transmembrane segment at 17–37 (WPVTVITAVVYLALVVPLLVV) threads the bilayer. Topologically, residues 38–387 (HHVVPSAPSS…SAFVVFELHT (350 aa)) are vacuolar. 2 N-linked (GlcNAc...) asparagine glycosylation sites follow: N53 and N119. H171 and D183 together coordinate Zn(2+). Catalysis depends on E217, which acts as the Proton acceptor. 3 residues coordinate Zn(2+): E218, E243, and H316. A helical membrane pass occupies residues 388-408 (LFALSVTLLVVAPLVLLVTSI). The Cytoplasmic portion of the chain corresponds to 409–441 (ALARADKMYLFRSSASPEDSDGSEVVPLHGVRG). The helical transmembrane segment at 442-462 (FFRFPFLLVIPTAVTVGLAYL) threads the bilayer. Residues 463–472 (VTKFNPYIIH) are Vacuolar-facing. A helical transmembrane segment spans residues 473 to 493 (SSEYAVWSMMISAWVFLAWFV). Residues 494-507 (SRVADFARPSAFHR) lie on the Cytoplasmic side of the membrane. The helical transmembrane segment at 508–528 (VYTLTWLFLVEWVFLVISTVY) threads the bilayer. Residues 529 to 532 (ENQY) lie on the Vacuolar side of the membrane. Residues 533–553 (GLAGGYFVLFVFAGTFLATWI) traverse the membrane as a helical segment. Topologically, residues 554–661 (SYLELFALPR…WSIHLPKWVW (108 aa)) are cytoplasmic. Residues 577–610 (RTSSHGSRLGTASGEDVEDGEDEDDDGTTAEATE) form a disordered region. Over residues 591 to 604 (EDVEDGEDEDDDGT) the composition is skewed to acidic residues. The chain crosses the membrane as a helical span at residues 662 to 682 (VLQFLLTAPLVLIFVGPLALL). The Vacuolar segment spans residues 683–698 (LTSALRQTGQDGSPSL). Residues 699-719 (FIYIAVAALTTLLFIPLLPFI) traverse the membrane as a helical segment. Residues 720-725 (HRYTHH) lie on the Cytoplasmic side of the membrane. A helical transmembrane segment spans residues 726 to 746 (IPLFLLCVFAGTLIYNLVAFP). The Vacuolar portion of the chain corresponds to 747–965 (FSPANRLKLF…LVEGSRRFEV (219 aa)). N-linked (GlcNAc...) asparagine glycosylation is found at N793 and N830.

It belongs to the peptidase M28 family. Zn(2+) serves as cofactor.

The protein localises to the vacuole membrane. Its function is as follows. May be involved in vacuolar sorting and osmoregulation. The chain is Vacuolar membrane protease from Aspergillus fumigatus (strain CBS 144.89 / FGSC A1163 / CEA10) (Neosartorya fumigata).